A 107-amino-acid chain; its full sequence is Iron-binding protein IscA (107 aa).

Residues Cys-35, Cys-99, and Cys-101 each coordinate Fe cation.

This sequence belongs to the HesB/IscA family. Homodimer; may form tetramers and higher multimers. Fe cation serves as cofactor.

Functionally, is able to transfer iron-sulfur clusters to apo-ferredoxin. Multiple cycles of [2Fe2S] cluster formation and transfer are observed, suggesting that IscA acts catalytically. Recruits intracellular free iron so as to provide iron for the assembly of transient iron-sulfur cluster in IscU in the presence of IscS, L-cysteine and the thioredoxin reductase system TrxA/TrxB. The polypeptide is Iron-binding protein IscA (Salmonella newport (strain SL254)).